The sequence spans 579 residues: GPI alpha-1,2-mannosyltransferase 4 (579 aa).

The next 8 membrane-spanning stretches (helical) occupy residues 131-151, 156-173, 180-200, 216-236, 258-278, 369-389, 391-411, and 416-436; these read LLLT…APPM, WNAL…VFYT, IEGL…TWGP, LGGI…FAVV, ALVL…TDSW, YLLL…HQEA, FLIP…QPVP, and VVLF…GGLV.

It belongs to the glycosyltransferase 22 family. PIGZ subfamily. In terms of tissue distribution, widely expressed at low level, with highest level in brain and colon.

It localises to the endoplasmic reticulum membrane. It functions in the pathway glycolipid biosynthesis; glycosylphosphatidylinositol-anchor biosynthesis. Alpha-1,2-mannosyltransferase that catalyzes the transfer of the fourth mannose, via an alpha-1,2 bond, from a dolichol-phosphate-mannose (Dol-P-Man) to an alpha-D-Man-(1-&gt;2)-alpha-D-Man-(1-&gt;6)-2-PEtn-alpha-D-Man-(1-&gt;4)-alpha-D-GlcN-(1-&gt;6)-(1-radyl,2-acyl-sn-glycero-3-phospho)-2-acyl-inositol (also termed H6) intermediate and participates in the twelfth step of the glycosylphosphatidylinositol-anchor biosynthesis. The presence of a fourth mannose in GPI is facultative, suggesting that it only exists in some tissues. This is GPI alpha-1,2-mannosyltransferase 4 from Homo sapiens (Human).